A 505-amino-acid chain; its full sequence is Maturase K (505 aa).

It belongs to the intron maturase 2 family. MatK subfamily.

It is found in the plastid. The protein localises to the chloroplast. Its function is as follows. Usually encoded in the trnK tRNA gene intron. Probably assists in splicing its own and other chloroplast group II introns. The polypeptide is Maturase K (Dioon edule (Virgin's palm)).